The chain runs to 50 residues: Protein hunchback (50 aa).

3 C2H2-type zinc fingers span residues 1–5 (HLRNH), 11–33 (FKCN…MKSH), and 39–50 (YRCADCTYATKY).

The protein belongs to the hunchback C2H2-type zinc-finger protein family.

The protein localises to the nucleus. Functionally, gap class segmentation protein that controls development of head structures. This Platynereis dumerilii (Dumeril's clam worm) protein is Protein hunchback (hb).